Consider the following 108-residue polypeptide: Nucleoid-associated protein Mpe_A2533 (108 aa).

Residues 86 to 108 (TSEEKMGKLTAGMPLPPGMKLPF) form a disordered region. Residues 99–108 (PLPPGMKLPF) show a composition bias toward pro residues.

The protein belongs to the YbaB/EbfC family. In terms of assembly, homodimer.

It is found in the cytoplasm. Its subcellular location is the nucleoid. Functionally, binds to DNA and alters its conformation. May be involved in regulation of gene expression, nucleoid organization and DNA protection. In Methylibium petroleiphilum (strain ATCC BAA-1232 / LMG 22953 / PM1), this protein is Nucleoid-associated protein Mpe_A2533.